A 485-amino-acid polypeptide reads, in one-letter code: Inosine-5'-monophosphate dehydrogenase (485 aa).

2 CBS domains span residues 95-154 and 155-215; these read VITN…IDDV and MTKE…AKDS. NAD(+) is bound by residues Asp-249 and 299–301; that span reads GIG. Residues Gly-301 and Gly-303 each coordinate K(+). Ser-304 is an IMP binding site. Residue Cys-306 coordinates K(+). Cys-306 serves as the catalytic Thioimidate intermediate. IMP is bound by residues 339 to 341, 362 to 363, and 386 to 390; these read DGG, GS, and YRGMG. The active-site Proton acceptor is the Arg-402. Glu-414 lines the IMP pocket. K(+) is bound by residues Glu-468, Ser-469, and His-470.

The protein belongs to the IMPDH/GMPR family. In terms of assembly, homotetramer. K(+) serves as cofactor.

It catalyses the reaction IMP + NAD(+) + H2O = XMP + NADH + H(+). It functions in the pathway purine metabolism; XMP biosynthesis via de novo pathway; XMP from IMP: step 1/1. With respect to regulation, mycophenolic acid (MPA) is a non-competitive inhibitor that prevents formation of the closed enzyme conformation by binding to the same site as the amobile flap. In contrast, mizoribine monophosphate (MZP) is a competitive inhibitor that induces the closed conformation. MPA is a potent inhibitor of mammalian IMPDHs but a poor inhibitor of the bacterial enzymes. MZP is a more potent inhibitor of bacterial IMPDH. Catalyzes the conversion of inosine 5'-phosphate (IMP) to xanthosine 5'-phosphate (XMP), the first committed and rate-limiting step in the de novo synthesis of guanine nucleotides, and therefore plays an important role in the regulation of cell growth. The chain is Inosine-5'-monophosphate dehydrogenase from Halalkalibacterium halodurans (strain ATCC BAA-125 / DSM 18197 / FERM 7344 / JCM 9153 / C-125) (Bacillus halodurans).